Here is an 87-residue protein sequence, read N- to C-terminus: Homeotic protein ultrabithorax (87 aa).

The Antp-type hexapeptide signature appears at Phe22 to Ala27.

It belongs to the Antp homeobox family. In terms of tissue distribution, in the embryo, expression is seen in the epidermis, somatic and visceral mesoderm, and the peripheral and central nervous system.

The protein localises to the nucleus. Sequence-specific transcription factor which is part of a developmental regulatory system that provides cells with specific positional identities on the anterior-posterior axis. Binds the consensus region 5'-TTAAT[GT][GA]-3'. This homeotic protein controls development of the cells in the posterior thoracic and first abdominal segments. It activates the synthesis of the decapentaplegic (DPP) growth factor. This is Homeotic protein ultrabithorax (Ubx) from Drosophila virilis (Fruit fly).